We begin with the raw amino-acid sequence, 118 residues long: Holo-[acyl-carrier-protein] synthase (118 aa).

Residues Asp-8 and Glu-58 each contribute to the Mg(2+) site.

The protein belongs to the P-Pant transferase superfamily. AcpS family. Requires Mg(2+) as cofactor.

The protein resides in the cytoplasm. The enzyme catalyses apo-[ACP] + CoA = holo-[ACP] + adenosine 3',5'-bisphosphate + H(+). Functionally, transfers the 4'-phosphopantetheine moiety from coenzyme A to a Ser of acyl-carrier-protein. In Streptococcus equi subsp. zooepidemicus (strain MGCS10565), this protein is Holo-[acyl-carrier-protein] synthase.